A 91-amino-acid polypeptide reads, in one-letter code: UPF0250 protein PSPTO_4820 (91 aa).

This sequence belongs to the UPF0250 family.

The protein is UPF0250 protein PSPTO_4820 of Pseudomonas syringae pv. tomato (strain ATCC BAA-871 / DC3000).